Here is a 498-residue protein sequence, read N- to C-terminus: Meiosis-specific nuclear structural protein 1 (498 aa).

Coiled-coil stretches lie at residues 45–211 (KSEE…FLKE), 270–348 (LAFA…QRLE), and 385–450 (DDRI…RQKI).

It belongs to the MNS1 family.

It is found in the nucleus. The protein resides in the cytoplasm. The protein localises to the cytoskeleton. It localises to the cilium axoneme. Its subcellular location is the flagellum axoneme. Its function is as follows. Microtubule inner protein (MIP) part of the dynein-decorated doublet microtubules (DMTs) in cilia axoneme, which is required for motile cilia beating. May play a role in the control of meiotic division and germ cell differentiation through regulation of pairing and recombination during meiosis. Required for sperm flagella assembly. May play a role in the assembly and function of the outer dynein arm-docking complex (ODA-DC). ODA-DC mediates outer dynein arms (ODA) binding onto the axonemal doublet microtubules. This is Meiosis-specific nuclear structural protein 1 (mns1) from Xenopus tropicalis (Western clawed frog).